The sequence spans 559 residues: Tryprostatin B 6-hydroxylase (559 aa).

The next 3 membrane-spanning stretches (helical) occupy residues 13 to 35 (PSVM…HLSY), 48 to 65 (YVRF…LLYA), and 82 to 104 (VSLL…RTLF). Cys-502 contributes to the heme binding site.

The protein belongs to the cytochrome P450 family. The cofactor is heme.

The protein localises to the membrane. The enzyme catalyses tryprostatin B + reduced [NADPH--hemoprotein reductase] + O2 = 6-hydroxytryprostatin B + oxidized [NADPH--hemoprotein reductase] + H2O + H(+). The protein operates within mycotoxin biosynthesis. In terms of biological role, cytochrome P450 monooxygenase; part of the gene cluster that mediates the biosynthesis of fumitremorgins, indole alkaloids that carry not only intriguing chemical structures, but also interesting biological and pharmacological activities. The biosynthesis of fumitremorgin-type alkaloids begins by condensation of the two amino acids L-tryptophan and L-proline to brevianamide F, catalyzed by the non-ribosomal peptide synthetase ftmA. Brevianamide F is then prenylated by the prenyltransferase ftmPT1/ftmB in the presence of dimethylallyl diphosphate, resulting in the formation of tryprostatin B. The three cytochrome P450 monooxygenases, ftmP450-1/ftmC, ftmP450-2/ftmE and ftmP450-3/FtmG, are responsible for the conversion of tryprostatin B to 6-hydroxytryprostatin B, tryprostatin A to fumitremorgin C and fumitremorgin C to 12,13-dihydroxyfumitremorgin C, respectively. The putative methyltransferase ftmMT/ftmD is expected for the conversion of 6-hydroxytryprostatin B to tryprostatin A. FtmPT2/FtmH catalyzes the prenylation of 12,13-dihydroxyfumitre-morgin C in the presence of dimethylallyl diphosphate, resulting in the formation of fumitremorgin B. Fumitremorgin B is further converted to verruculogen by ftmOx1/ftmF via the insertion of an endoperoxide bond between the two prenyl moieties. In some fungal species, verruculogen is further converted to fumitremorgin A, but the enzymes involved in this step have not been identified yet. The polypeptide is Tryprostatin B 6-hydroxylase (Aspergillus fumigatus (Neosartorya fumigata)).